Here is a 378-residue protein sequence, read N- to C-terminus: Cobalt-precorrin-5B C(1)-methyltransferase (378 aa).

Belongs to the CbiD family.

It catalyses the reaction Co-precorrin-5B + S-adenosyl-L-methionine = Co-precorrin-6A + S-adenosyl-L-homocysteine. It participates in cofactor biosynthesis; adenosylcobalamin biosynthesis; cob(II)yrinate a,c-diamide from sirohydrochlorin (anaerobic route): step 6/10. In terms of biological role, catalyzes the methylation of C-1 in cobalt-precorrin-5B to form cobalt-precorrin-6A. The protein is Cobalt-precorrin-5B C(1)-methyltransferase of Tolumonas auensis (strain DSM 9187 / NBRC 110442 / TA 4).